The following is a 149-amino-acid chain: uncharacterized protein (149 aa).

The segment at 1-103 (MFGLKVKNAE…SPTQGSRLRH (103 aa)) is disordered. A compositionally biased stretch (basic and acidic residues) spans 7–18 (KNAEADTAKSNE). The span at 26-41 (TGSSTTSGSGQSTQRG) shows a compositional bias: low complexity. Positions 61–72 (GSQGNSGDQGTE) are enriched in polar residues.

It belongs to the adhesin P1 family.

This is an uncharacterized protein from Mycoplasma pneumoniae (strain ATCC 29342 / M129 / Subtype 1) (Mycoplasmoides pneumoniae).